We begin with the raw amino-acid sequence, 107 residues long: uncharacterized protein (107 aa).

This is an uncharacterized protein from Schizosaccharomyces pombe (strain 972 / ATCC 24843) (Fission yeast).